The following is a 621-amino-acid chain: UvrABC system protein C (621 aa).

Residues 20–98 (TAPGVYRMYA…IKSLTPRYNV (79 aa)) enclose the GIY-YIG domain. The UVR domain occupies 207-242 (DLLAEELIQAMQVASEHLEFEQAARLRDLLTSLRSM).

Belongs to the UvrC family. In terms of assembly, interacts with UvrB in an incision complex.

Its subcellular location is the cytoplasm. Its function is as follows. The UvrABC repair system catalyzes the recognition and processing of DNA lesions. UvrC both incises the 5' and 3' sides of the lesion. The N-terminal half is responsible for the 3' incision and the C-terminal half is responsible for the 5' incision. The polypeptide is UvrABC system protein C (Xylella fastidiosa (strain M23)).